The chain runs to 859 residues: Leucine--tRNA ligase (859 aa).

The 'HIGH' region signature appears at Pro-42–His-52. The short motif at Lys-618 to Ser-622 is the 'KMSKS' region element. Lys-621 is a binding site for ATP.

Belongs to the class-I aminoacyl-tRNA synthetase family.

Its subcellular location is the cytoplasm. It catalyses the reaction tRNA(Leu) + L-leucine + ATP = L-leucyl-tRNA(Leu) + AMP + diphosphate. The protein is Leucine--tRNA ligase of Shewanella baltica (strain OS195).